Reading from the N-terminus, the 707-residue chain is MNYSLFISCSKGLEYLLEDELKGLGLHVTQVSPQGVYGEASLPVIYNLCLWSRLANRIQLILFSGHAAKEQAVHQLCTDFHWQTVFTHDKTIAIEFHGASEQIRNTMFGAQIVKDGIVDHFRRLNGSRPSVDKEKPQILIHAHLKNDILTVSFDLVGYSLHQRGYRKKAGKAPLKENVAAAMLLRAKWPELAAQGYGLHDPFCGSGTLVIEAAMMAAHIAPGLLRQDQSLQYWARHQSSLWEKLRTQALQQVKPLAVKLVGTDADGKIITLARSNAERAGVLPLVEFNTLPLNACRPGTKRGLVVCNPPYGERLGEVTQLVPLYQQLGTTLHTCYQGWQAAILTSSPVLAKALGLRADKQYTLYNGPLECKLYCLTLSAANKLKNTPDAPLSDNAQMLFNRLEKNRNHLQKWARKNQITCYRIYDADLPEYAYAIDIYNDYAVLQEYAPPASIPVHKAEKRSLEMLQVVPRALGIHPEKLIVKQRKQQKGSEQYQKIGKTSQRLIVTEGKAKLIVNLYDYLDTGLFLDHRLMRLKFAQLEPGTRFLNCFCYTASASVHAALAGALTTNVDLSKTYLLWAEDNFRLNDINLSKHQFLQYDCKEWMKTTRDKFDVIFLDPPSFSNSKRMSDILDIQRDHVSLINMAMRLLNPDGVLYFSTNLRQFKLEPMLKEKYAVQDITPQTIDQDFKRNSKIHHCFKIVMPHFADN.

The 112-residue stretch at 44–155 (VIYNLCLWSR…NDILTVSFDL (112 aa)) folds into the THUMP domain.

It belongs to the methyltransferase superfamily. RlmKL family.

It localises to the cytoplasm. It carries out the reaction guanosine(2445) in 23S rRNA + S-adenosyl-L-methionine = N(2)-methylguanosine(2445) in 23S rRNA + S-adenosyl-L-homocysteine + H(+). The enzyme catalyses guanosine(2069) in 23S rRNA + S-adenosyl-L-methionine = N(2)-methylguanosine(2069) in 23S rRNA + S-adenosyl-L-homocysteine + H(+). Functionally, specifically methylates the guanine in position 2445 (m2G2445) and the guanine in position 2069 (m7G2069) of 23S rRNA. The sequence is that of Ribosomal RNA large subunit methyltransferase K/L from Legionella pneumophila (strain Paris).